The sequence spans 256 residues: Signal peptidase I (256 aa).

Catalysis depends on residues S32 and K75.

The protein belongs to the peptidase S26 family.

The enzyme catalyses Cleavage of hydrophobic, N-terminal signal or leader sequences from secreted and periplasmic proteins.. The chain is Signal peptidase I (lepB) from Aquifex aeolicus (strain VF5).